A 348-amino-acid polypeptide reads, in one-letter code: GMP reductase 2 (348 aa).

NADP(+)-binding positions include 26–27, K78, 129–131, and 180–181; these read SR, DVA, and IG. G181, G183, and C186 together coordinate K(+). C186 serves as the catalytic Thioimidate intermediate. T188 serves as the catalytic Proton donor/acceptor. R189 contacts K(+). Residues 219 to 221, 242 to 243, 268 to 270, and 286 to 290 contribute to the GMP site; these read DGG, GG, GMS, and RASEG. NADP(+)-binding positions include M269 and 285-286; that span reads YR. K291 carries the N6-acetyllysine modification. An NADP(+)-binding site is contributed by 314–317; the sequence is STCT.

This sequence belongs to the IMPDH/GMPR family. GuaC type 1 subfamily. Homotetramer.

It catalyses the reaction IMP + NH4(+) + NADP(+) = GMP + NADPH + 2 H(+). Functionally, catalyzes the irreversible NADPH-dependent deamination of GMP to IMP. It functions in the conversion of nucleobase, nucleoside and nucleotide derivatives of G to A nucleotides, and in maintaining the intracellular balance of A and G nucleotides. Plays a role in modulating cellular differentiation. This is GMP reductase 2 from Bos taurus (Bovine).